A 315-amino-acid chain; its full sequence is GPN-loop GTPase 2 (315 aa).

12-17 is a binding site for GTP; the sequence is GSGKST. A Gly-Pro-Asn (GPN)-loop; involved in dimer interface motif is present at residues 69–71; it reads GPN. 172–175 contacts GTP; the sequence is SKAD.

Belongs to the GPN-loop GTPase family. Heterodimers with gpn1 or fet5/gpn3. Binds to RNA polymerase II (RNAPII).

Its subcellular location is the cytoplasm. The protein localises to the nucleus. In terms of biological role, small GTPase required for proper nuclear import of RNA polymerase II and III (RNAPII and RNAPIII). May act at an RNAP assembly step prior to nuclear import. This chain is GPN-loop GTPase 2, found in Schizosaccharomyces pombe (strain 972 / ATCC 24843) (Fission yeast).